A 631-amino-acid chain; its full sequence is Nucleoside triphosphatase I (631 aa).

Positions Phe42–Gly204 constitute a Helicase ATP-binding domain. His55–Thr62 is an ATP binding site. The DEXH box signature appears at Asp141–His144. The Helicase C-terminal domain occupies Lys367–Lys532. Positions Asp457 to Phe524 are binding to the cap-specific mRNA (nucleoside-2'-O-)-methyltransferase.

The protein belongs to the helicase family. NPH I subfamily. As to quaternary structure, monomer. Interacts (via C-terminus) with RAP94/OPG109 (via N-terminus). Interacts with the cap-specific mRNA (nucleoside-2'-O-)-methyltransferase OPG102.

The protein localises to the virion. It carries out the reaction a ribonucleoside 5'-triphosphate + H2O = a ribonucleoside 5'-diphosphate + phosphate + H(+). Functionally, DNA-dependent ATPase that acts as a 5' to 3' translocase on single-stranded DNA and thereby plays a role in transcription termination of viral early genes. Uses forward translocation in concert with the viral RNA polymerase RAP94/OPG109 subunit and the capping enzyme/VTF to catalyze release of UUUUUNU-containing nascent RNA from the elongation complex. In addition, acts as a positive elongation factor to assist transcription through problematic sequences. This is Nucleoside triphosphatase I (OPG123) from Vaccinia virus (strain Copenhagen) (VACV).